We begin with the raw amino-acid sequence, 137 residues long: Histone H2B (137 aa).

Over residues 1–10 (MPPKPADKKP) the composition is skewed to basic and acidic residues. A disordered region spans residues 1–45 (MPPKPADKKPASKAPATASKAPEKKDAGKKTAASGDKKKRTKARK). Residues lysine 8 and lysine 9 each carry the N6-acetyllysine; alternate modification. Residues lysine 8 and lysine 9 each participate in a glycyl lysine isopeptide (Lys-Gly) (interchain with G-Cter in SUMO); alternate cross-link. Serine 12 carries the post-translational modification Phosphoserine. Lysine 13 carries the N6-acetyllysine modification. Lysine 24 is modified (N6-acetyllysine; alternate). Residue lysine 24 forms a Glycyl lysine isopeptide (Lys-Gly) (interchain with G-Cter in SUMO); alternate linkage. Residue lysine 25 forms a Glycyl lysine isopeptide (Lys-Gly) (interchain with G-Cter in SUMO) linkage. Residue lysine 131 forms a Glycyl lysine isopeptide (Lys-Gly) (interchain with G-Cter in ubiquitin) linkage.

The protein belongs to the histone H2B family. In terms of assembly, the nucleosome is a histone octamer containing two molecules each of H2A, H2B, H3 and H4 assembled in one H3-H4 heterotetramer and two H2A-H2B heterodimers. The octamer wraps approximately 147 bp of DNA. In terms of processing, monoubiquitinated by the ubc-2-bre-1 complex to form H2BK123ub1. H2BK123ub1 gives a specific tag for epigenetic transcriptional activation and is also prerequisite for H3K4me and H3K79me formation. H2BK123ub1 also modulates the formation of double-strand breaks during meiosis and is a prerequisite for DNA-damage checkpoint activation. Post-translationally, phosphorylated by ste-20 to form H2BS10ph during progression through meiotic prophase. May be correlated with chromosome condensation. Acetylated by gcn-5 to form H2BK11ac and H2BK16ac. H2BK16ac can also be formed by esa-1. Acetylation of N-terminal lysines and particularly formation of H2BK11acK16ac has a positive effect on transcription. In terms of processing, sumoylation to form H2BK6su or H2BK7su, and probably also H2BK16su or H2BK17su, occurs preferentially near the telomeres and represses gene transcription.

The protein localises to the nucleus. Its subcellular location is the chromosome. Core component of nucleosome. Nucleosomes wrap and compact DNA into chromatin, limiting DNA accessibility to the cellular machineries which require DNA as a template. Histones thereby play a central role in transcription regulation, DNA repair, DNA replication and chromosomal stability. DNA accessibility is regulated via a complex set of post-translational modifications of histones, also called histone code, and nucleosome remodeling. This Neurospora crassa (strain ATCC 24698 / 74-OR23-1A / CBS 708.71 / DSM 1257 / FGSC 987) protein is Histone H2B (hh2b).